The primary structure comprises 219 residues: Proteasome subunit beta (219 aa).

A propeptide spans 1-14 (removed in mature form; by autocatalysis); sequence MISNSEYHKEYMKG. Catalysis depends on Thr-15, which acts as the Nucleophile.

This sequence belongs to the peptidase T1B family. In terms of assembly, the 20S proteasome core is composed of 14 alpha and 14 beta subunits that assemble into four stacked heptameric rings, resulting in a barrel-shaped structure. The two inner rings, each composed of seven catalytic beta subunits, are sandwiched by two outer rings, each composed of seven alpha subunits. The catalytic chamber with the active sites is on the inside of the barrel. Has a gated structure, the ends of the cylinder being occluded by the N-termini of the alpha-subunits. Is capped at one or both ends by the proteasome regulatory ATPase, PAN.

The protein localises to the cytoplasm. It catalyses the reaction Cleavage of peptide bonds with very broad specificity.. The formation of the proteasomal ATPase PAN-20S proteasome complex, via the docking of the C-termini of PAN into the intersubunit pockets in the alpha-rings, triggers opening of the gate for substrate entry. Interconversion between the open-gate and close-gate conformations leads to a dynamic regulation of the 20S proteasome proteolysis activity. Functionally, component of the proteasome core, a large protease complex with broad specificity involved in protein degradation. The chain is Proteasome subunit beta from Methanococcus maripaludis (strain C6 / ATCC BAA-1332).